A 470-amino-acid chain; its full sequence is Ribulose bisphosphate carboxylase large chain (470 aa).

Substrate-binding residues include Asn-115 and Thr-165. The Proton acceptor role is filled by Lys-167. Lys-169 serves as a coordination point for substrate. The Mg(2+) site is built by Lys-193, Asp-195, and Glu-196. An N6-carboxylysine modification is found at Lys-193. The active-site Proton acceptor is His-286. Substrate contacts are provided by Arg-287, His-319, and Ser-371.

The protein belongs to the RuBisCO large chain family. Type I subfamily. Heterohexadecamer of 8 large chains and 8 small chains. Forms a CsoS2-CsoS1-RuBisCO complex. Mg(2+) serves as cofactor.

The protein resides in the carboxysome. The enzyme catalyses 2 (2R)-3-phosphoglycerate + 2 H(+) = D-ribulose 1,5-bisphosphate + CO2 + H2O. It carries out the reaction D-ribulose 1,5-bisphosphate + O2 = 2-phosphoglycolate + (2R)-3-phosphoglycerate + 2 H(+). RuBisCO catalyzes two reactions: the carboxylation of D-ribulose 1,5-bisphosphate, the primary event in carbon dioxide fixation, as well as the oxidative fragmentation of the pentose substrate in the photorespiration process. Both reactions occur simultaneously and in competition at the same active site. The chain is Ribulose bisphosphate carboxylase large chain from Prochlorococcus marinus (strain MIT 9313).